A 201-amino-acid polypeptide reads, in one-letter code: Pyridoxal 5'-phosphate synthase subunit PdxT (201 aa).

50–52 (GES) contributes to the L-glutamine binding site. Cys-82 functions as the Nucleophile in the catalytic mechanism. L-glutamine-binding positions include Arg-115 and 143 to 144 (IR). Active-site charge relay system residues include His-179 and Glu-181.

It belongs to the glutaminase PdxT/SNO family. As to quaternary structure, in the presence of PdxS, forms a dodecamer of heterodimers. Only shows activity in the heterodimer.

It carries out the reaction aldehydo-D-ribose 5-phosphate + D-glyceraldehyde 3-phosphate + L-glutamine = pyridoxal 5'-phosphate + L-glutamate + phosphate + 3 H2O + H(+). The enzyme catalyses L-glutamine + H2O = L-glutamate + NH4(+). It participates in cofactor biosynthesis; pyridoxal 5'-phosphate biosynthesis. Its function is as follows. Catalyzes the hydrolysis of glutamine to glutamate and ammonia as part of the biosynthesis of pyridoxal 5'-phosphate. The resulting ammonia molecule is channeled to the active site of PdxS. This Deinococcus geothermalis (strain DSM 11300 / CIP 105573 / AG-3a) protein is Pyridoxal 5'-phosphate synthase subunit PdxT.